The primary structure comprises 493 residues: Intermediate cleaving peptidase 55, mitochondrial (493 aa).

A mitochondrion-targeting transit peptide spans 1-19 (MQFLARNLVRRVSRTQVVS). Mn(2+) contacts are provided by D296, D307, H383, E410, and E433.

The protein belongs to the peptidase M24B family. Mn(2+) serves as cofactor.

It is found in the mitochondrion. The protein resides in the nucleus. In terms of biological role, aminopeptidase which cleaves preprotein intermediates that carry destabilizing N-ter amino acid residues after the mitochondrial processing peptidase (MPP) cleavage site and is thus critical for stabilization of the mitochondrial proteome. In Arabidopsis thaliana (Mouse-ear cress), this protein is Intermediate cleaving peptidase 55, mitochondrial.